Here is an 850-residue protein sequence, read N- to C-terminus: Lon protease (850 aa).

Residues L38–I232 enclose the Lon N-terminal domain. G384 to T391 provides a ligand contact to ATP. The Lon proteolytic domain occupies E634–R815. Residues S721 and K764 contribute to the active site. Residues P819–H850 form a disordered region. Over residues K821–S840 the composition is skewed to basic residues. Residues R841–H850 show a composition bias toward polar residues.

It belongs to the peptidase S16 family. Homohexamer. Organized in a ring with a central cavity.

It is found in the cytoplasm. The catalysed reaction is Hydrolysis of proteins in presence of ATP.. Its function is as follows. ATP-dependent serine protease that mediates the selective degradation of mutant and abnormal proteins as well as certain short-lived regulatory proteins. Required for cellular homeostasis and for survival from DNA damage and developmental changes induced by stress. Degrades polypeptides processively to yield small peptide fragments that are 5 to 10 amino acids long. Binds to DNA in a double-stranded, site-specific manner. In Xanthomonas oryzae pv. oryzae (strain KACC10331 / KXO85), this protein is Lon protease.